Here is a 3037-residue protein sequence, read N- to C-terminus: Genome polyprotein (3037 aa).

The residue at position 2 (Ser-2) is an N-acetylserine; by host. An interaction with STAT1 region spans residues 2–23; it reads STNPKPQRKTKRNTNRRPQDVK. The tract at residues 2–58 is interaction with EIF2AK2/PKR; sequence STNPKPQRKTKRNTNRRPQDVKFPGGGQIVGGVYLLPRRGPRLGVRAARKTSERSQP. The interaction with DDX3X stretch occupies residues 2–59; it reads STNPKPQRKTKRNTNRRPQDVKFPGGGQIVGGVYLLPRRGPRLGVRAARKTSERSQPR. The segment at 2–75 is disordered; that stretch reads STNPKPQRKT…PKDRRSTGKS (74 aa). At 2-168 the chain is on the cytoplasmic side; it reads STNPKPQRKT…EDGINYATGN (167 aa). 2 short sequence motifs (nuclear localization signal) span residues 5–13 and 38–43; these read PKPQRKTKR and PRRGPR. The span at 7–16 shows a compositional bias: basic residues; the sequence is PQRKTKRNTN. The span at 32 to 47 shows a compositional bias: low complexity; sequence GGVYLLPRRGPRLGVR. Ser-53 carries the phosphoserine; by host modification. Short sequence motifs (nuclear localization signal) lie at residues 58–64 and 66–71; these read PRGRRQP and PKDRRS. Phosphoserine; by host occurs at positions 99 and 116. The interval 112 to 152 is important for endoplasmic reticulum and mitochondrial localization; the sequence is PRHKSRNLGKVIDTLTCGFADLMGYIPVVGAPVGGVARALA. The interaction with APOA2 stretch occupies residues 122-173; it reads VIDTLTCGFADLMGYIPVVGAPVGGVARALAHGVRVLEDGINYATGNLPGCS. The interval 164–167 is important for lipid droplets localization; that stretch reads YATG. The chain crosses the membrane as a helical span at residues 169-189; the sequence is LPGCSFSIFLLALLSCISVPV. The propeptide at 178 to 191 is ER anchor for the core protein, removed in mature form by host signal peptidase; sequence LLALLSCISVPVSA. The Lumenal portion of the chain corresponds to 190-358; sequence SAVEVRNTSS…TGGHWGVMFG (169 aa). Asn-196, Asn-209, and Asn-234 each carry an N-linked (GlcNAc...) asparagine; by host glycan. Residues 265–296 are important for fusion; it reads IVMSATLCSALYVGDVCGALMIAAQVVVVSPQ. Asn-305 is a glycosylation site (N-linked (GlcNAc...) asparagine; by host). The helical transmembrane segment at 359 to 379 threads the bilayer; sequence LAYFSMQGAWAKVVVILLLTA. Over 380-729 the chain is Lumenal; that stretch reads GVEASTYTTG…WEWVVLLFLL (350 aa). The interval 385-412 is HVR1; that stretch reads TYTTGAVVGRSTHLFTSMFSLGSQQRVQ. Residues Asn-417, Asn-423, and Asn-430 are each glycosylated (N-linked (GlcNAc...) (high mannose) asparagine; by host). 4 disulfide bridges follow: Cys-429/Cys-554, Cys-452/Cys-459, Cys-488/Cys-496, and Cys-505/Cys-510. The N-linked (GlcNAc...) asparagine; by host glycan is linked to Asn-448. Positions 475-480 are HVR2; that stretch reads EESVTN. The interval 482-495 is CD81-binding 1; that stretch reads ADMRPYCWHYPPRP. Asn-534 is a glycosylation site (N-linked (GlcNAc...) asparagine; by host). Residues 546 to 553 are CD81-binding 2; it reads PPKGAWFG. The N-linked (GlcNAc...) asparagine; by host glycan is linked to Asn-558. Cystine bridges form between Cys-566/Cys-571, Cys-585/Cys-589, Cys-601/Cys-624, and Cys-611/Cys-648. N-linked (GlcNAc...) (high mannose) asparagine; by host glycosylation is found at Asn-627 and Asn-649. Cys-656 and Cys-681 are disulfide-bonded. The interval 664–675 is PKR/eIF2-alpha phosphorylation homology domain (PePHD); that stretch reads SQLSPLLHSTTE. The helical transmembrane segment at 730-750 threads the bilayer; sequence LADARVCACLWMLLLLGQAEA. Residues 751–761 are Lumenal-facing; sequence ALEKLVILHAA. Residues 762–782 traverse the membrane as a helical segment; the sequence is SAASSNGLLYFILFFVAAWCI. The Cytoplasmic portion of the chain corresponds to 783–786; it reads KGRA. Residues 787–807 traverse the membrane as a helical segment; that stretch reads VPMVTYTLLGCWSFVLLLMAL. The Lumenal segment spans residues 808-817; sequence PHQAYALDAA. Residues 818–838 traverse the membrane as a helical segment; it reads EQGQIGMALLIAITAFTITPA. At 839–885 the chain is on the cytoplasmic side; it reads YKILLSRCLWWTCYMLVLAEALIQDWIPPLQARGGRDGVIWAMTMFY. The chain crosses the membrane as a helical span at residues 886 to 906; the sequence is PGVVFDITKWLLAILGPGYLF. A Peptidase C18 domain is found at 905-1030; it reads LFRAAVMRTP…GYTSKGWRLL (126 aa). Residues 907–932 lie on the Lumenal side of the membrane; sequence RAAVMRTPYFVRANALLRMCALVKQL. Positions 908–1210 are protease NS2-3; it reads AAVMRTPYFV…PVESLDVVTR (303 aa). Cys-926 is lipidated: S-palmitoyl cysteine; by host. A helical transmembrane segment spans residues 933–953; that stretch reads AGGKYVQVALITLGKWTGTYI. The segment at 933 to 953 is interaction with host SCPS1; the sequence is AGGKYVQVALITLGKWTGTYI. Residues 954–1661 are Cytoplasmic-facing; the sequence is YDHLSPMSDW…CMQADLEIMT (708 aa). Residues His-956, Glu-976, and Cys-997 each act as for protease NS2 activity; shared with dimeric partner in the active site. Positions 1031-1212 constitute a Peptidase S29 domain; it reads APITAYAQQT…ESLDVVTRSP (182 aa). Catalysis depends on charge relay system; for serine protease NS3 activity residues His-1087 and Asp-1111. Positions 1127 and 1129 each coordinate Zn(2+). The active-site Charge relay system; for serine protease NS3 activity is the Ser-1169. 2 residues coordinate Zn(2+): Cys-1175 and His-1179. The Helicase ATP-binding domain maps to 1221-1373; that stretch reads PAVPQTYQVG…PNIEEVALGH (153 aa). 1234–1241 contributes to the ATP binding site; that stretch reads APTGSGKS. Ser-1241 and Glu-1321 together coordinate Mg(2+). The DECH box signature appears at 1320–1323; that stretch reads DECH. Residues 1490–1502 are RNA-binding; the sequence is QRRGRTGRGRLGI. Residues 1662 to 1682 form a helical membrane-spanning segment; it reads STWVLAGGVLAAVAAYCLATG. Positions 1683–1694 are NS3-binding; it reads CVSIIGRIHVNQ. The Cytoplasmic portion of the chain corresponds to 1683–1809; the sequence is CVSIIGRIHV…ALTSPLSTST (127 aa). Residues 1810 to 1830 traverse the membrane as a helical segment; that stretch reads TILLNIMGGWLASQIAPPAGA. Topologically, residues 1831 to 1832 are lumenal; the sequence is TG. The chain crosses the membrane as a helical span at residues 1833 to 1853; that stretch reads FVVSGLVGAAVGSIGLGKILV. A topological domain (cytoplasmic) is located at residue Asp-1854. The helical transmembrane segment at 1855 to 1875 threads the bilayer; it reads VLAGYGAGISGALVAFKIMSG. Residues 1876–1885 lie on the Lumenal side of the membrane; the sequence is EKPSVEDVVN. Residues 1886–1906 form a helical membrane-spanning segment; it reads LLPAILSPGALVVGVICAAIL. Over 1907–1976 the chain is Cytoplasmic; the sequence is RRHVGQGEGA…WITEDCPVPC (70 aa). Residue Cys-1976 is the site of S-palmitoyl cysteine; by host attachment. The stretch at 1977-2006 is an intramembrane region; sequence SGSWLRDVWDWVCSILIDFKNWLSAKLFPR. Residues 2007-3016 lie on the Cytoplasmic side of the membrane; sequence LPGIPFISCQ…YHSVSRARPR (1010 aa). Residues Cys-2015, Cys-2033, Cys-2035, and Cys-2056 each contribute to the Zn(2+) site. The interval 2124 to 2212 is FKBP8-binding; sequence EFFSWVDGVQ…ASSSASQLSA (89 aa). Residues 2124–2336 form a transcriptional activation region; sequence EFFSWVDGVQ…PVPPPRRRRA (213 aa). The segment at 2139–2143 is interaction with non-structural protein 4A; sequence PTPKA. The tract at residues 2193–2464 is interaction with host SKP2; sequence RLARGSPPSA…ALITPCSPEE (272 aa). Phosphoserine; by host occurs at positions 2198, 2201, 2205, 2208, 2211, and 2214. The segment at 2214-2253 is ISDR; that stretch reads SLRATCTTHAKCPDIDMVDANLFCWCTMGGNMTRIESESK. The interaction with EIF2AK2/PKR stretch occupies residues 2214-2279; the sequence is SLRATCTTHA…REPSIPSEYL (66 aa). The NS4B-binding stretch occupies residues 2253-2310; it reads KVLMVDSFDPVVDKEDEREPSIPSEYLLPKSRFPPALPPWARPDYNPPLLETWKRPDY. The segment at 2303–2381 is V3; sequence ETWKRPDYQP…GTTGETSKSP (79 aa). The short motif at 2326–2329 is the SH3-binding element; the sequence is TPVP. Positions 2331 to 2339 match the Nuclear localization signal motif; sequence PRRRRAVVL. Lys-2354 is covalently cross-linked (Glycyl lysine isopeptide (Lys-Gly) (interchain with G-Cter in ubiquitin)). The interval 2354 to 2434 is disordered; that stretch reads KSFGCPPPSG…APGSDSGSWS (81 aa). A compositionally biased stretch (acidic residues) spans 2402-2411; that stretch reads EPGDPDLEPE. Phosphoserine; by host is present on residues Ser-2475 and Ser-2488. The RdRp catalytic domain maps to 2660-2778; sequence PMGFSYDTRC…ISESQGVEED (119 aa). Mg(2+)-binding residues include Asp-2666, Asp-2764, and Asp-2765. A helical transmembrane segment spans residues 3017–3037; sequence LLLLGLLLLCVGVGIFLLPAR.

It belongs to the hepacivirus polyprotein family. In terms of assembly, homooligomer. Interacts with E1 (via C-terminus). Interacts with the non-structural protein 5A. Interacts (via N-terminus) with host STAT1 (via SH2 domain); this interaction results in decreased STAT1 phosphorylation and ubiquitin-mediated proteasome-dependent STAT1 degradation, leading to decreased IFN-stimulated gene transcription. Interacts with host STAT3; this interaction constitutively activates STAT3. Interacts with host LTBR receptor. Interacts with host TNFRSF1A receptor and possibly induces apoptosis. Interacts with host HNRPK. Interacts with host YWHAE. Interacts with host UBE3A/E6AP. Interacts with host DDX3X. Interacts with host APOA2. Interacts with host RXRA protein. Interacts with host SP110 isoform 3/Sp110b; this interaction sequesters the transcriptional corepressor SP110 away from the nucleus. Interacts with host CREB3 nuclear transcription protein; this interaction triggers cell transformation. Interacts with host ACY3. Interacts with host C1QR1. Interacts with host RBM24; this interaction, which enhances the interaction of the mature core protein with 5'-UTR, may inhibit viral translation and favor replication. Interacts with host EIF2AK2/PKR; this interaction induces the autophosphorylation of EIF2AK2. Part of the viral assembly initiation complex composed of NS2, E1, E2, NS3, NS4A, NS5A and the mature core protein. As to quaternary structure, forms a heterodimer with envelope glycoprotein E2. Interacts with mature core protein. Interacts with protease NS2. The heterodimer E1/E2 interacts with host CLDN1; this interaction plays a role in viral entry into host cell. Interacts with host SPSB2 (via C-terminus). Part of the viral assembly initiation complex composed of NS2, E1, E2, NS3, NS4A, NS5A and the mature core protein. Interacts with host NEURL3; this interaction prevents E1 binding to glycoprotein E2. Forms a heterodimer with envelope glycoprotein E1. Interacts with host CD81 and SCARB1 receptors; these interactions play a role in viral entry into host cell. Interacts with host EIF2AK2/PKR; this interaction inhibits EIF2AK2 and probably allows the virus to evade the innate immune response. Interacts with host CD209/DC-SIGN and CLEC4M/DC-SIGNR. Interact with host SPCS1; this interaction is essential for viral particle assembly. Interacts with protease NS2. The heterodimer E1/E2 interacts with host CLDN1; this interaction plays a role in viral entry into host cell. Part of the viral assembly initiation complex composed of NS2, E1, E2, NS3, NS4A, NS5A and the mature core protein. Interacts with host SLC3A2/4F2hc; the interaction may facilitate viral entry into host cell. Interacts with human PLSCR1. In terms of assembly, homohexamer. Homoheptamer. Interacts with protease NS2. As to quaternary structure, homodimer. Interacts with host SPCS1; this interaction is essential for viral particle assembly. Interacts with envelope glycoprotein E1. Interacts with envelope glycoprotein E2. Interacts with viroporin p7. Interacts with serine protease/helicase NS3. Part of the replication complex composed of NS2, NS3, NS4A, NS4B, NS5A and the RNA-directed RNA polymerase embedded in an ER-derived membranous web. Part of the viral assembly initiation complex composed of NS2, E1, E2, NS3, NS4A, NS5A and the mature core protein. Interacts with protease NS2. Interacts with non-structural protein 4A; this interaction stabilizes the folding of NS3 serine protease. NS3-NS4A interaction is essential for NS3 activation and allows membrane anchorage of the latter. NS3/NS4A complex also prevents phosphorylation of host IRF3, thus preventing the establishment of dsRNA induced antiviral state. Interacts with host MAVS; this interaction leads to the cleavage and inhibition of host MAVS. Interacts with host TICAM1; this interaction leads to the cleavage and inhibition of host TICAM1. Interacts with host TANK-binding kinase/TBK1; this interaction results in the inhibition of the association between TBK1 and IRF3, which leads to the inhibition of IRF3 activation. Interacts with host RBM24. Part of the replication complex composed of NS2, NS3, NS4A, NS4B, NS5A and the RNA-directed RNA polymerase embedded in an ER-derived membranous web. Part of the viral assembly initiation complex composed of NS2, E1, E2, NS3, NS4A, NS5A and the mature core protein. In terms of assembly, interacts with NS3 serine protease; this interaction stabilizes the folding of NS3 serine protease. NS3-NS4A interaction is essential for NS3 activation and allows membrane anchorage of the latter. Interacts with non-structural protein 5A (via N-terminus). Part of the replication complex composed of NS2, NS3, NS4A, NS4B, NS5A and the RNA-directed RNA polymerase embedded in an ER-derived membranous web. Part of the viral assembly initiation complex composed of NS2, E1, E2, NS3, NS4A, NS5A and the mature core protein. As to quaternary structure, homomultimer. Interacts with non-structural protein NS5A. Interacts with host PLA2G4C; this interaction likely initiates the recruitment of replication complexes to lipid droplets. Interacts with host STING; this interaction disrupts the interaction between STING and TBK1 thereby suppressing the interferon signaling. Part of the replication complex composed of NS2, NS3, NS4A, NS4B, NS5A and the RNA-directed RNA polymerase embedded in an ER-derived membranous web. Monomer. Homodimer; dimerization is required for RNA-binding. Interacts with the mature core protein. Interacts (via N-terminus) with non-structural protein 4A. Interacts with non-structural protein 4B. Interacts (via region D2) with RNA-directed RNA polymerase. Part of the viral assembly initiation complex composed of NS2, E1, E2, NS3, NS4A, NS5A and the mature core protein. Part of the replication complex composed of NS2, NS3, NS4A, NS4B, NS5A and the RNA-directed RNA polymerase embedded in an ER-derived membranous web. Interacts with host GRB2. Interacts with host BIN1. Interacts with host PIK3R1. Interacts with host SRCAP. Interacts with host FKBP8. Interacts (via C-terminus) with host VAPB (via MSP domain). Interacts with host EIF2AK2/PKR; this interaction leads to disruption of EIF2AK2 dimerization by NS5A and probably allows the virus to evade the innate immune response. Interacts (via N-terminus) with host PACSIN2 (via N-terminus); this interaction attenuates protein kinase C alpha-mediated phosphorylation of PACSIN2 by disrupting the interaction between PACSIN2 and PRKCA. Interacts (via N-terminus) with host SRC kinase (via SH2 domain). Interacts with most Src-family kinases. Interacts with host IFI27 and SKP2; promotes the ubiquitin-mediated proteasomal degradation of NS5A. Interacts with host GPS2. Interacts with host TNFRSF21; this interaction allows the modulation by the virus of JNK, p38 MAPK, STAT3, and Akt signaling pathways in a DR6-dependent manner. Interacts (via N-terminus) with host CIDEB (via N-terminus); this interaction seems to regulate the association of HCV particles with APOE. Interacts with host CHKA/Choline Kinase-alpha; CHKA bridges host PI4KA and NS5A and potentiates NS5A-stimulated PI4KA activity, which then facilitates the targeting of the ternary complex to the ER for viral replication. Interacts with host SPSB2 (via C-terminus); this interaction targets NS5A for ubiquitination and degradation. Interacts with host RAB18; this interaction may promote the association of NS5A and other replicase components with lipid droplets. Interacts (via region D2) with host PPIA/CYPA; the interaction stimulates RNA-binding ability of NS5A and is dependent on the peptidyl-prolyl cis-trans isomerase activity of PPIA/CYPA. Interacts with host TRIM14; this interaction induces the degradation of NS5A. In terms of assembly, homooligomer. Interacts with non-structural protein 5A. Interacts with host VAPB. Interacts with host PRK2/PKN2. Interacts with host HNRNPA1 and SEPT6; these interactions facilitate viral replication. Part of the replication complex composed of NS2, NS3, NS4A, NS4B, NS5A and the RNA-directed RNA polymerase. Zn(2+) is required as a cofactor. The cofactor is Mg(2+). Post-translationally, specific enzymatic cleavages in vivo yield mature proteins. The structural proteins, core, E1, E2 and p7 are produced by proteolytic processing by host signal peptidases. The core protein precursor is synthesized as a 23 kDa, which is retained in the ER membrane through the hydrophobic signal peptide. Cleavage by the signal peptidase releases the 21 kDa mature core protein. The cleavage of the core protein precursor occurs between aminoacids 176 and 188 but the exact cleavage site is not known. Some degraded forms of the core protein appear as well during the course of infection. The other proteins (p7, NS2, NS3, NS4A, NS4B, NS5A and NS5B) are cleaved by the viral proteases. Autoprocessing between NS2 and NS3 is mediated by the NS2 cysteine protease catalytic domain and regulated by the NS3 N-terminal domain. Phosphorylated by host PKC and PKA. In terms of processing, ubiquitinated; mediated by UBE3A and leading to core protein subsequent proteasomal degradation. Post-translationally, highly N-glycosylated. Palmitoylation is required for NS2/3 autoprocessing and E2 recruitment to membranes. In terms of processing, palmitoylated. This modification may play a role in its polymerization or in protein-protein interactions. Post-translationally, phosphorylated on serines in a basal form termed p56. p58 is a hyperphosphorylated form of p56. p56 and p58 coexist in the cell in roughly equivalent amounts. Hyperphosphorylation is dependent on the presence of NS4A. Host CSNK1A1/CKI-alpha or RPS6KB1 kinases may be responsible for NS5A phosphorylation. Tyrosine phosphorylation is essential for the interaction with host SRC. In terms of processing, the N-terminus is phosphorylated by host PRK2/PKN2.

It is found in the host endoplasmic reticulum membrane. The protein localises to the host mitochondrion membrane. The protein resides in the virion. It localises to the host cytoplasm. Its subcellular location is the host nucleus. It is found in the host lipid droplet. The protein localises to the virion membrane. The protein resides in the host mitochondrion. It localises to the host cell membrane. Its subcellular location is the host perinuclear region. The enzyme catalyses Hydrolysis of four peptide bonds in the viral precursor polyprotein, commonly with Asp or Glu in the P6 position, Cys or Thr in P1 and Ser or Ala in P1'.. It catalyses the reaction a ribonucleoside 5'-triphosphate + H2O = a ribonucleoside 5'-diphosphate + phosphate + H(+). The catalysed reaction is ATP + H2O = ADP + phosphate + H(+). It carries out the reaction RNA(n) + a ribonucleoside 5'-triphosphate = RNA(n+1) + diphosphate. Its activity is regulated as follows. Inhibited by the antiviral drug hexamethylene amiloride. Inhibition by amantadine appears to be genotype-dependent. Also inhibited by long-alkyl-chain iminosugar derivatives. With respect to regulation, activity is up-regulated by PRK2/PKN2-mediated phosphorylation. Packages viral RNA to form a viral nucleocapsid, and promotes virion budding. Participates in the viral particle production as a result of its interaction with the non-structural protein 5A. Binds RNA and may function as a RNA chaperone to induce the RNA structural rearrangements taking place during virus replication. Modulates viral translation initiation by interacting with viral IRES and 40S ribosomal subunit. Affects various cell signaling pathways, host immunity and lipid metabolism. Prevents the establishment of cellular antiviral state by blocking the interferon-alpha/beta (IFN-alpha/beta) and IFN-gamma signaling pathways and by blocking the formation of phosphorylated STAT1 and promoting ubiquitin-mediated proteasome-dependent degradation of STAT1. Activates STAT3 leading to cellular transformation. Regulates the activity of cellular genes, including c-myc and c-fos. May repress the promoter of p53, and sequester CREB3 and SP110 isoform 3/Sp110b in the cytoplasm. Represses cell cycle negative regulating factor CDKN1A, thereby interrupting an important check point of normal cell cycle regulation. Targets transcription factors involved in the regulation of inflammatory responses and in the immune response: suppresses TNF-induced NF-kappa-B activation, and activates AP-1. Binds to dendritic cells (DCs) via C1QR1, resulting in down-regulation of T-lymphocytes proliferation. Alters lipid metabolism by interacting with hepatocellular proteins involved in lipid accumulation and storage. Induces up-regulation of FAS promoter activity, and thereby contributes to the increased triglyceride accumulation in hepatocytes (steatosis). Its function is as follows. Forms a heterodimer with envelope glycoprotein E2, which mediates virus attachment to the host cell, virion internalization through clathrin-dependent endocytosis and fusion with host membrane. Fusion with the host cell is most likely mediated by both E1 and E2, through conformational rearrangements of the heterodimer required for fusion rather than a classical class II fusion mechanism. E1/E2 heterodimer binds host apolipoproteins such as APOB and ApoE thereby forming a lipo-viro-particle (LVP). APOE associated to the LVP allows the initial virus attachment to cell surface receptors such as the heparan sulfate proteoglycans (HSPGs), syndecan-1 (SDC1), syndecan-1 (SDC2), the low-density lipoprotein receptor (LDLR) and scavenger receptor class B type I (SCARB1). The cholesterol transfer activity of SCARB1 allows E2 exposure and binding of E2 to SCARB1 and the tetraspanin CD81. E1/E2 heterodimer binding on CD81 activates the epithelial growth factor receptor (EGFR) signaling pathway. Diffusion of the complex E1-E2-EGFR-SCARB1-CD81 to the cell lateral membrane allows further interaction with Claudin 1 (CLDN1) and occludin (OCLN) to finally trigger HCV entry. Functionally, forms a heterodimer with envelope glycoprotein E1, which mediates virus attachment to the host cell, virion internalization through clathrin-dependent endocytosis and fusion with host membrane. Fusion with the host cell is most likely mediated by both E1 and E2, through conformational rearrangements of the heterodimer required for fusion rather than a classical class II fusion mechanism. The interaction between envelope glycoprotein E2 and host apolipoprotein E/APOE allows the proper assembly, maturation and infectivity of the viral particles. This interaction is probably promoted via the up-regulation of cellular autophagy by the virus. E1/E2 heterodimer binds host apolipoproteins such as APOB and APOE thereby forming a lipo-viro-particle (LVP). APOE associated to the LVP allows the initial virus attachment to cell surface receptors such as the heparan sulfate proteoglycans (HSPGs), syndecan-1 (SDC1), syndecan-1 (SDC2), the low-density lipoprotein receptor (LDLR) and scavenger receptor class B type I (SCARB1). The cholesterol transfer activity of SCARB1 allows E2 exposure and binding of E2 to SCARB1 and the tetraspanin CD81. E1/E2 heterodimer binding on CD81 activates the epithelial growth factor receptor (EGFR) signaling pathway. Diffusion of the complex E1-E2-EGFR-SCARB1-CD81 to the cell lateral membrane allows further interaction with Claudin 1 (CLDN1) and occludin (OCLN) to finally trigger HCV entry. Inhibits host EIF2AK2/PKR activation, preventing the establishment of an antiviral state. Viral ligand for CD209/DC-SIGN and CLEC4M/DC-SIGNR, which are respectively found on dendritic cells (DCs), and on liver sinusoidal endothelial cells and macrophage-like cells of lymph node sinuses. These interactions allow the capture of circulating HCV particles by these cells and subsequent facilitated transmission to permissive cells such as hepatocytes and lymphocyte subpopulations. The interaction between E2 and host amino acid transporter complex formed by SLC3A2 and SLC7A5/LAT1 may facilitate viral entry into host cell. In terms of biological role, ion channel protein that acts as a viroporin and plays an essential role in the assembly, envelopment and secretion of viral particles. Regulates the host cell secretory pathway, which induces the intracellular retention of viral glycoproteins and favors assembly of viral particles. Creates a pore in acidic organelles and releases Ca(2+) and H(+) in the cytoplasm of infected cells, leading to a productive viral infection. High levels of cytoplasmic Ca(2+) may trigger membrane trafficking and transport of viral ER-associated proteins to viroplasms, sites of viral genome replication. This ionic imbalance induces the assembly of the inflammasome complex, which triggers the maturation of pro-IL-1beta into IL-1beta through the action of caspase-1. Targets also host mitochondria and induces mitochondrial depolarization. In addition of its role as a viroporin, acts as a lipid raft adhesion factor. Cysteine protease required for the proteolytic auto-cleavage between the non-structural proteins NS2 and NS3. The N-terminus of NS3 is required for the function of NS2 protease (active region NS2-3). Promotes the initiation of viral particle assembly by mediating the interaction between structural and non-structural proteins. Its function is as follows. Displays three enzymatic activities: serine protease with a chymotrypsin-like fold, NTPase and RNA helicase. NS3 serine protease, in association with NS4A, is responsible for the cleavages of NS3-NS4A, NS4A-NS4B, NS4B-NS5A and NS5A-NS5B. The NS3/NS4A complex prevents phosphorylation of host IRF3, thus preventing the establishment of dsRNA induced antiviral state. The NS3/NS4A complex induces host amino acid transporter component SLC3A2, thus contributing to HCV propagation. NS3 RNA helicase binds to RNA and unwinds both dsDNA and dsRNA in the 3' to 5' direction, and likely resolves RNA complicated stable secondary structures in the template strand. Binds a single ATP and catalyzes the unzipping of a single base pair of dsRNA. Inhibits host antiviral proteins TBK1 and IRF3 thereby preventing the establishment of an antiviral state. Cleaves host MAVS/CARDIF thereby preventing the establishment of an antiviral state. Cleaves host TICAM1/TRIF, thereby disrupting TLR3 signaling and preventing the establishment of an antiviral state. Functionally, induces a specific membrane alteration that serves as a scaffold for the virus replication complex. This membrane alteration gives rise to the so-called ER-derived membranous web that contains the replication complex. NS4B self-interaction contributes to its function in membranous web formation. Promotes host TRIF protein degradation in a CASP8-dependent manner thereby inhibiting host TLR3-mediated interferon signaling. Disrupts the interaction between STING and TBK1 contributing to the inhibition of interferon signaling. In terms of biological role, phosphorylated protein that is indispensable for viral replication and assembly. Both hypo- and hyperphosphorylated states are required for the viral life cycle. The hyperphosphorylated form of NS5A is an inhibitor of viral replication. Involved in RNA-binding and especially in binding to the viral genome. Zinc is essential for RNA-binding. Participates in the viral particle production as a result of its interaction with the mature viral core protein. Its interaction with host VAPB may target the viral replication complex to vesicles. Down-regulates viral IRES translation initiation. Mediates interferon resistance, presumably by interacting with and inhibiting host EIF2AK2/PKR. Prevents BIN1-induced apoptosis. Acts as a transcriptional activator of some host genes important for viral replication when localized in the nucleus. Via the interaction with host PACSIN2, modulates lipid droplet formation in order to promote virion assembly. Modulates TNFRSF21/DR6 signaling pathway for viral propagation. RNA-dependent RNA polymerase that performs primer-template recognition and RNA synthesis during viral replication. Initiates RNA transcription/replication at a flavin adenine dinucleotide (FAD), resulting in a 5'- FAD cap on viral RNAs. In this way, recognition of viral 5' RNA by host pattern recognition receptors can be bypassed, thereby evading activation of antiviral pathways. This chain is Genome polyprotein, found in Hepatitis C virus genotype 2c (isolate BEBE1) (HCV).